A 490-amino-acid polypeptide reads, in one-letter code: Adenylosuccinate lyase (490 aa).

Ala2 is subject to N-acetylalanine. Substrate contacts are provided by residues 26-27, 91-93, and 117-118; these read RY, RHD, and TS. Position 153 is an N6-acetyllysine (Lys153). Residue His165 is the Proton donor/acceptor of the active site. Position 247 (Gln247) interacts with substrate. Ser295 functions as the Proton donor/acceptor in the catalytic mechanism. Position 301 is an N6-acetyllysine (Lys301). Substrate contacts are provided by Arg309, Arg335, Ser340, and Arg344. Lys421 participates in a covalent cross-link: Glycyl lysine isopeptide (Lys-Gly) (interchain with G-Cter in SUMO1).

It belongs to the lyase 1 family. Adenylosuccinate lyase subfamily. Homotetramer. Residues from neighboring subunits contribute catalytic and substrate-binding residues to each active site.

The catalysed reaction is N(6)-(1,2-dicarboxyethyl)-AMP = fumarate + AMP. It carries out the reaction (2S)-2-[5-amino-1-(5-phospho-beta-D-ribosyl)imidazole-4-carboxamido]succinate = 5-amino-1-(5-phospho-beta-D-ribosyl)imidazole-4-carboxamide + fumarate. It participates in purine metabolism; AMP biosynthesis via de novo pathway; AMP from IMP: step 2/2. It functions in the pathway purine metabolism; IMP biosynthesis via de novo pathway; 5-amino-1-(5-phospho-D-ribosyl)imidazole-4-carboxamide from 5-amino-1-(5-phospho-D-ribosyl)imidazole-4-carboxylate: step 2/2. Its function is as follows. Catalyzes two non-sequential steps in de novo AMP synthesis: converts (S)-2-(5-amino-1-(5-phospho-D-ribosyl)imidazole-4-carboxamido)succinate (SAICAR) to fumarate plus 5-amino-1-(5-phospho-D-ribosyl)imidazole-4-carboxamide, and thereby also contributes to de novo IMP synthesis, and converts succinyladenosine monophosphate (SAMP) to AMP and fumarate. The sequence is that of Adenylosuccinate lyase (ADSL) from Bos taurus (Bovine).